The chain runs to 393 residues: tRNA(Met) cytidine acetate ligase (393 aa).

Residues glycine 81, asparagine 142, and arginine 167 each coordinate ATP.

Belongs to the TmcAL family.

The protein localises to the cytoplasm. It catalyses the reaction cytidine(34) in elongator tRNA(Met) + acetate + ATP = N(4)-acetylcytidine(34) in elongator tRNA(Met) + AMP + diphosphate. Catalyzes the formation of N(4)-acetylcytidine (ac(4)C) at the wobble position of elongator tRNA(Met), using acetate and ATP as substrates. First activates an acetate ion to form acetyladenylate (Ac-AMP) and then transfers the acetyl group to tRNA to form ac(4)C34. The chain is tRNA(Met) cytidine acetate ligase from Bacillus anthracis (strain A0248).